The chain runs to 326 residues: Thiamine thiazole synthase (326 aa).

Substrate contacts are provided by residues cysteine 87, 108 to 109 (EA), glycine 116, and valine 181. Cysteine 215 is subject to 2,3-didehydroalanine (Cys). Substrate-binding positions include aspartate 217, histidine 232, methionine 284, and 294 to 296 (RMG).

This sequence belongs to the THI4 family. As to quaternary structure, homooctamer. The cofactor is Fe cation. In terms of processing, during the catalytic reaction, a sulfide is transferred from Cys-215 to a reaction intermediate, generating a dehydroalanine residue.

It localises to the cytoplasm. The protein resides in the nucleus. It catalyses the reaction [ADP-thiazole synthase]-L-cysteine + glycine + NAD(+) = [ADP-thiazole synthase]-dehydroalanine + ADP-5-ethyl-4-methylthiazole-2-carboxylate + nicotinamide + 3 H2O + 2 H(+). Functionally, involved in biosynthesis of the thiamine precursor thiazole. Catalyzes the conversion of NAD and glycine to adenosine diphosphate 5-(2-hydroxyethyl)-4-methylthiazole-2-carboxylic acid (ADT), an adenylated thiazole intermediate. The reaction includes an iron-dependent sulfide transfer from a conserved cysteine residue of the protein to a thiazole intermediate. The enzyme can only undergo a single turnover, which suggests it is a suicide enzyme. May have additional roles in adaptation to various stress conditions and in DNA damage tolerance. The sequence is that of Thiamine thiazole synthase from Sclerotinia sclerotiorum (strain ATCC 18683 / 1980 / Ss-1) (White mold).